A 292-amino-acid chain; its full sequence is Lyso-ornithine lipid O-acyltransferase (292 aa).

Residues 11–31 (GMLLVMVSLVLMPVQILCLWL) form a helical membrane-spanning segment. A disordered region spans residues 258 to 292 (RLRGRSRSAAKGEPAPACSAAPDIPSDAQRSRLAP).

It belongs to the 1-acyl-sn-glycerol-3-phosphate acyltransferase family. OlsA subfamily.

Its subcellular location is the membrane. It catalyses the reaction a lyso-ornithine lipid + a fatty acyl-[ACP] = an N(2)-[(3R)-3-(acyloxy)acyl]-L-ornithine lipid + holo-[ACP]. Its pathway is lipid metabolism. In terms of biological role, catalyzes the second step in the formation of ornithine lipids, which are phosphorus-free membrane lipids. Uses acyl-acyl carrier protein (acyl-AcpP) as an acyl donor and converts lyso-ornithine lipid (LOL) into ornithine lipid (OL). This chain is Lyso-ornithine lipid O-acyltransferase, found in Rhizobium meliloti (strain 1021) (Ensifer meliloti).